The following is an 871-amino-acid chain: Alanine--tRNA ligase (871 aa).

Zn(2+)-binding residues include H559, H563, C661, and H665.

The protein belongs to the class-II aminoacyl-tRNA synthetase family. Zn(2+) is required as a cofactor.

Its subcellular location is the cytoplasm. The catalysed reaction is tRNA(Ala) + L-alanine + ATP = L-alanyl-tRNA(Ala) + AMP + diphosphate. Catalyzes the attachment of alanine to tRNA(Ala) in a two-step reaction: alanine is first activated by ATP to form Ala-AMP and then transferred to the acceptor end of tRNA(Ala). Also edits incorrectly charged Ser-tRNA(Ala) and Gly-tRNA(Ala) via its editing domain. This chain is Alanine--tRNA ligase, found in Aquifex pyrophilus.